The chain runs to 353 residues: Outer membrane protein P5 (353 aa).

An N-terminal signal peptide occupies residues 1–21 (MKKTAIALVVAGLAAASVAQA). 8 consecutive transmembrane segments (beta stranded) span residues 27–37 (TFYAGVKAGQA), 58–69 (SFTYGVFGGYQI), 77–85 (LAVELGYDD), 104–115 (HGAHLSLKGSYE), 120–128 (LDVYGKAGV), 158–167 (GLFAVGAEYA), 172–179 (LAVRLEYQ), and 205–213 (SINAGISYR). An OmpA-like domain is found at 227-353 (VVSKTFSLNS…RVEIAVNGTK (127 aa)). The cysteines at positions 326 and 338 are disulfide-linked.

This sequence belongs to the outer membrane OOP (TC 1.B.6) superfamily. OmpA family. Monomer and homodimer.

The protein resides in the cell outer membrane. Its function is as follows. With TolR probably plays a role in maintaining the position of the peptidoglycan cell wall in the periplasm. Acts as a porin with low permeability that allows slow penetration of small solutes; an internal gate slows down solute passage. The sequence is that of Outer membrane protein P5 from Haemophilus influenzae.